The primary structure comprises 245 residues: Ribonuclease 3 (245 aa).

Positions 18-146 (LSKFLENLSI…FVGAIYLDSG (129 aa)) constitute an RNase III domain. Glu-59 contacts Mg(2+). The active site involves Asp-63. The Mg(2+) site is built by Asp-132 and Glu-135. Glu-135 is an active-site residue. The DRBM domain maps to 173–242 (DYKSLLQEYV…AEVALKAMEN (70 aa)).

Belongs to the ribonuclease III family. As to quaternary structure, homodimer. Mg(2+) is required as a cofactor.

Its subcellular location is the cytoplasm. It catalyses the reaction Endonucleolytic cleavage to 5'-phosphomonoester.. Its function is as follows. Digests double-stranded RNA. Involved in the processing of primary rRNA transcript to yield the immediate precursors to the large and small rRNAs (23S and 16S). Processes some mRNAs, and tRNAs when they are encoded in the rRNA operon. Processes pre-crRNA and tracrRNA of type II CRISPR loci if present in the organism. The polypeptide is Ribonuclease 3 (Borreliella burgdorferi (strain ATCC 35210 / DSM 4680 / CIP 102532 / B31) (Borrelia burgdorferi)).